The chain runs to 184 residues: Heme transporter hrg-4 (184 aa).

Residues 19-39 (IGWTIFGIVFGISAILTYAIK) form a helical membrane-spanning segment. Asn42 carries N-linked (GlcNAc...) asparagine glycosylation. Helical transmembrane passes span 46-66 (TATT…YWAL), 87-107 (VFIG…AGIT), and 124-146 (IYFS…WSLV).

The protein belongs to the HRG family.

It localises to the cell membrane. In terms of biological role, heme transporter that mediates heme uptake across the plasma membrane. The protein is Heme transporter hrg-4 of Caenorhabditis elegans.